The chain runs to 32 residues: Phospholipase A2 (32 aa).

Ca(2+) contacts are provided by tyrosine 16, glycine 18, and glycine 20.

Requires Ca(2+) as cofactor. As to expression, expressed by the venom gland.

It is found in the secreted. It carries out the reaction a 1,2-diacyl-sn-glycero-3-phosphocholine + H2O = a 1-acyl-sn-glycero-3-phosphocholine + a fatty acid + H(+). Its function is as follows. PLA2 catalyzes the calcium-dependent hydrolysis of the 2-acyl groups in 3-sn-phosphoglycerides. The protein is Phospholipase A2 of Micrurus lemniscatus (South American coral snake).